The primary structure comprises 199 residues: Recombination protein RecR (199 aa).

The C4-type zinc finger occupies 58–73 (CRTCFSLSDQPECRIC). Positions 81–176 (SIICVVEKPT…NVTRIASGVP (96 aa)) constitute a Toprim domain.

The protein belongs to the RecR family.

In terms of biological role, may play a role in DNA repair. It seems to be involved in an RecBC-independent recombinational process of DNA repair. It may act with RecF and RecO. The chain is Recombination protein RecR from Desulforapulum autotrophicum (strain ATCC 43914 / DSM 3382 / VKM B-1955 / HRM2) (Desulfobacterium autotrophicum).